The chain runs to 419 residues: Serine--tRNA ligase (419 aa).

Position 226 to 228 (226 to 228) interacts with L-serine; it reads TSE. Residues 257–259 and V273 contribute to the ATP site; that span reads RRE. E280 is a binding site for L-serine. An ATP-binding site is contributed by 344 to 347; that stretch reads ELTS. Position 379 (T379) interacts with L-serine.

This sequence belongs to the class-II aminoacyl-tRNA synthetase family. Type-1 seryl-tRNA synthetase subfamily. Homodimer. The tRNA molecule binds across the dimer.

The protein resides in the cytoplasm. It carries out the reaction tRNA(Ser) + L-serine + ATP = L-seryl-tRNA(Ser) + AMP + diphosphate + H(+). The enzyme catalyses tRNA(Sec) + L-serine + ATP = L-seryl-tRNA(Sec) + AMP + diphosphate + H(+). Its pathway is aminoacyl-tRNA biosynthesis; selenocysteinyl-tRNA(Sec) biosynthesis; L-seryl-tRNA(Sec) from L-serine and tRNA(Sec): step 1/1. Functionally, catalyzes the attachment of serine to tRNA(Ser). Is also able to aminoacylate tRNA(Sec) with serine, to form the misacylated tRNA L-seryl-tRNA(Sec), which will be further converted into selenocysteinyl-tRNA(Sec). In Mycolicibacterium vanbaalenii (strain DSM 7251 / JCM 13017 / BCRC 16820 / KCTC 9966 / NRRL B-24157 / PYR-1) (Mycobacterium vanbaalenii), this protein is Serine--tRNA ligase.